The sequence spans 535 residues: Phosphoenolpyruvate carboxykinase (ATP) (535 aa).

Positions 59, 201, and 207 each coordinate substrate. ATP-binding positions include Lys-207, His-226, and 243 to 251; that span reads GLSGTGKTT. The Mn(2+) site is built by Lys-207 and His-226. Position 264 (Asp-264) interacts with Mn(2+). ATP is bound by residues Glu-292, Arg-328, 444–445, and Thr-450; that span reads RI. Residue Arg-328 coordinates substrate.

It belongs to the phosphoenolpyruvate carboxykinase (ATP) family. Mn(2+) serves as cofactor.

The protein resides in the cytoplasm. The enzyme catalyses oxaloacetate + ATP = phosphoenolpyruvate + ADP + CO2. It functions in the pathway carbohydrate biosynthesis; gluconeogenesis. In terms of biological role, involved in the gluconeogenesis. Catalyzes the conversion of oxaloacetate (OAA) to phosphoenolpyruvate (PEP) through direct phosphoryl transfer between the nucleoside triphosphate and OAA. This is Phosphoenolpyruvate carboxykinase (ATP) from Porphyromonas gingivalis (strain ATCC 33277 / DSM 20709 / CIP 103683 / JCM 12257 / NCTC 11834 / 2561).